The chain runs to 50 residues: Large ribosomal subunit protein bL33 (50 aa).

This sequence belongs to the bacterial ribosomal protein bL33 family.

The protein is Large ribosomal subunit protein bL33 of Fusobacterium nucleatum subsp. nucleatum (strain ATCC 25586 / DSM 15643 / BCRC 10681 / CIP 101130 / JCM 8532 / KCTC 2640 / LMG 13131 / VPI 4355).